Consider the following 740-residue polypeptide: Probable RNA-dependent RNA polymerase 1 (740 aa).

Belongs to the RdRP family.

The catalysed reaction is RNA(n) + a ribonucleoside 5'-triphosphate = RNA(n+1) + diphosphate. In terms of biological role, probably involved in the RNA silencing pathway and required for the generation of small interfering RNAs (siRNAs). In Oryza sativa subsp. japonica (Rice), this protein is Probable RNA-dependent RNA polymerase 1 (RDR1).